Consider the following 113-residue polypeptide: Protein INCREASED RESISTANCE TO MYZUS PERSICAE 1 (113 aa).

An FLZ-type zinc finger spans residues 56-100 (DFLKTCSLCNRSLCHHRDIYMYRGNNAFCSLECREKQIKLDEKKA).

This sequence belongs to the FLZ family. Interacts with KIN10 and KIN11 via its FLZ-type zinc finger domain. Interacts with KINB3 via its N-terminal part. Interacts with GEBP.

It localises to the nucleus. The protein resides in the cytoplasm. May act as an adapter to facilitate the interaction of SnRK1 complex with effector proteins, conferring tissue- and stimulus-type specific differences in the SnRK1 regulation pathway. The chain is Protein INCREASED RESISTANCE TO MYZUS PERSICAE 1 from Arabidopsis thaliana (Mouse-ear cress).